Reading from the N-terminus, the 228-residue chain is Endonuclease V (228 aa).

The Mg(2+) site is built by D43 and D109.

It belongs to the endonuclease V family. Mg(2+) serves as cofactor.

Its subcellular location is the cytoplasm. The catalysed reaction is Endonucleolytic cleavage at apurinic or apyrimidinic sites to products with a 5'-phosphate.. Functionally, DNA repair enzyme involved in the repair of deaminated bases. Selectively cleaves double-stranded DNA at the second phosphodiester bond 3' to a deoxyinosine leaving behind the intact lesion on the nicked DNA. In Dictyoglomus turgidum (strain DSM 6724 / Z-1310), this protein is Endonuclease V.